A 106-amino-acid chain; its full sequence is Antitoxin MazE3 (106 aa).

As to quaternary structure, forms a complex with cognate toxin MazF3, possibly with 1:1 stoichiometry.

Antitoxin component of a type II toxin-antitoxin (TA) system. Upon expression in E.coli and M.smegmatis neutralizes the effect of cognate toxin MazF3. Overexpression of MazE3 alone decreased persister cells formation in M.smegmatis upon challenge with gentamicin or kanamycin. In Mycobacterium tuberculosis (strain ATCC 25618 / H37Rv), this protein is Antitoxin MazE3 (mazE3).